The following is a 136-amino-acid chain: Large ribosomal subunit protein uL16 (136 aa).

This sequence belongs to the universal ribosomal protein uL16 family. In terms of assembly, part of the 50S ribosomal subunit.

In terms of biological role, binds 23S rRNA and is also seen to make contacts with the A and possibly P site tRNAs. The polypeptide is Large ribosomal subunit protein uL16 (Shewanella denitrificans (strain OS217 / ATCC BAA-1090 / DSM 15013)).